A 231-amino-acid polypeptide reads, in one-letter code: MTRYYCEYCHSYLTHDTLSVRKSHLVGKNHLRITADYYRNKARDIINKHNHKRRHIGKRGRKERENSSQNETLKVTCLSNKEKRHIMHVKKMNQKELAQTSIDTLKLLYDGSPGYSKVFVDANRFDIGDLVKASKLPQRANEKSAHHSFKQTSRSRDETCESNPFPRLNNPKKLEPPKILSQWSNTIPKTSIFYSVDILQTTIKESKKRMHSDGIRKPSSANGYKRRRYGN.

A Matrin-type zinc finger spans residues 4-36; sequence YYCEYCHSYLTHDTLSVRKSHLVGKNHLRITAD. Positions 49-61 are enriched in basic residues; that stretch reads HNHKRRHIGKRGR. Disordered regions lie at residues 49–71, 137–177, and 205–231; these read HNHKRRHIGKRGRKERENSSQNE, PQRA…LEPP, and ESKKRMHSDGIRKPSSANGYKRRRYGN.

It belongs to the U1 small nuclear ribonucleoprotein C family. As to quaternary structure, U1 snRNP is composed of the 7 core Sm proteins SMB1, SMD1, SMD2, SMD3, SME1, SMX3 and SMX2 (Sm proteins B, D1, D2, D3, E, F and G, respectively) that assemble in a heptameric protein ring on the Sm site of the small nuclear RNA to form the core snRNP, and at least 10 U1 snRNP-specific proteins SNP1/U1-70K, MUD1/U1-A, YHC1/U1-C, LUC7, NAM8, PRP39, PRP40, PRP42, SNU56 and SNU71. YHC1/U1-C interacts with U1 snRNA and the 5' splice-site region of the pre-mRNA.

The protein localises to the nucleus. In terms of biological role, component of the spliceosomal U1 snRNP, which is essential for recognition of the pre-mRNA 5' splice-site and the subsequent assembly of the spliceosome. YHC1/U1-C is directly involved in initial 5' splice-site recognition for both constitutive and regulated alternative splicing. The interaction with the 5' splice-site seems to precede base-pairing between the pre-mRNA and the U1 snRNA. Stimulates commitment or early (E) complex formation by stabilizing the base pairing of the 5' end of the U1 snRNA and the 5' splice-site region. This Saccharomyces cerevisiae (strain ATCC 204508 / S288c) (Baker's yeast) protein is U1 small nuclear ribonucleoprotein C.